We begin with the raw amino-acid sequence, 347 residues long: NADH-ubiquinone oxidoreductase chain 2 (347 aa).

11 helical membrane passes run 3 to 23 (PLIM…VMTG), 25 to 45 (HWLM…PMLM), 59 to 79 (YFFT…INLM), 96 to 116 (IIMT…FWVP), 127 to 147 (GLIL…MISP), 148 to 168 (GINL…GGWG), 178 to 198 (IMAY…IYNP), 201 to 221 (TLLN…LFMI), 247 to 267 (TLLS…WMII), 276 to 296 (IVLP…YMRL), and 325 to 345 (LLTP…MMMI).

This sequence belongs to the complex I subunit 2 family. As to quaternary structure, core subunit of respiratory chain NADH dehydrogenase (Complex I) which is composed of 45 different subunits. Interacts with TMEM242.

Its subcellular location is the mitochondrion inner membrane. It carries out the reaction a ubiquinone + NADH + 5 H(+)(in) = a ubiquinol + NAD(+) + 4 H(+)(out). In terms of biological role, core subunit of the mitochondrial membrane respiratory chain NADH dehydrogenase (Complex I) which catalyzes electron transfer from NADH through the respiratory chain, using ubiquinone as an electron acceptor. Essential for the catalytic activity and assembly of complex I. The sequence is that of NADH-ubiquinone oxidoreductase chain 2 from Ozimops beccarii (Beccari's free-tailed bat).